Here is a 153-residue protein sequence, read N- to C-terminus: ATP synthase subunit b' (153 aa).

A helical transmembrane segment spans residues 23–40; that stretch reads LMAIQVVALTYILNSLFF.

Belongs to the ATPase B chain family. As to quaternary structure, F-type ATPases have 2 components, F(1) - the catalytic core - and F(0) - the membrane proton channel. F(1) has five subunits: alpha(3), beta(3), gamma(1), delta(1), epsilon(1). F(0) has four main subunits: a(1), b(1), b'(1) and c(10-14). The alpha and beta chains form an alternating ring which encloses part of the gamma chain. F(1) is attached to F(0) by a central stalk formed by the gamma and epsilon chains, while a peripheral stalk is formed by the delta, b and b' chains.

The protein resides in the cellular thylakoid membrane. Functionally, f(1)F(0) ATP synthase produces ATP from ADP in the presence of a proton or sodium gradient. F-type ATPases consist of two structural domains, F(1) containing the extramembraneous catalytic core and F(0) containing the membrane proton channel, linked together by a central stalk and a peripheral stalk. During catalysis, ATP synthesis in the catalytic domain of F(1) is coupled via a rotary mechanism of the central stalk subunits to proton translocation. In terms of biological role, component of the F(0) channel, it forms part of the peripheral stalk, linking F(1) to F(0). The b'-subunit is a diverged and duplicated form of b found in plants and photosynthetic bacteria. In Prochlorococcus marinus (strain MIT 9301), this protein is ATP synthase subunit b'.